The primary structure comprises 193 residues: Potassium-transporting ATPase KdpC subunit (193 aa).

A helical membrane pass occupies residues Val8–Gly28.

The protein belongs to the KdpC family. As to quaternary structure, the system is composed of three essential subunits: KdpA, KdpB and KdpC.

It is found in the cell inner membrane. In terms of biological role, part of the high-affinity ATP-driven potassium transport (or Kdp) system, which catalyzes the hydrolysis of ATP coupled with the electrogenic transport of potassium into the cytoplasm. This subunit acts as a catalytic chaperone that increases the ATP-binding affinity of the ATP-hydrolyzing subunit KdpB by the formation of a transient KdpB/KdpC/ATP ternary complex. The chain is Potassium-transporting ATPase KdpC subunit from Photorhabdus laumondii subsp. laumondii (strain DSM 15139 / CIP 105565 / TT01) (Photorhabdus luminescens subsp. laumondii).